Consider the following 290-residue polypeptide: Ribosomal protein L11 methyltransferase (290 aa).

S-adenosyl-L-methionine-binding residues include T135, G158, D180, and N227.

Belongs to the methyltransferase superfamily. PrmA family.

It localises to the cytoplasm. It catalyses the reaction L-lysyl-[protein] + 3 S-adenosyl-L-methionine = N(6),N(6),N(6)-trimethyl-L-lysyl-[protein] + 3 S-adenosyl-L-homocysteine + 3 H(+). Methylates ribosomal protein L11. The sequence is that of Ribosomal protein L11 methyltransferase from Mesorhizobium japonicum (strain LMG 29417 / CECT 9101 / MAFF 303099) (Mesorhizobium loti (strain MAFF 303099)).